Here is a 185-residue protein sequence, read N- to C-terminus: MHIIVGLGNPGKKYDATRHNIGFEAIDMLAKRNNIEVKKLKHKALCGEGTIGGNKVLLVKPQTFMNLSGQSLLDIVQFYKVDPKNIVVLYDDIDIPVGTLRIREKGSSGTHNGMKSIIYLLQTDQFPRIRIGVGKPQFGDLADYVLGRFPKEEIPTMLETLERASQAVETLVKDGIAVSMNRYNG.

Tyrosine 14 contributes to the tRNA binding site. Residue histidine 19 is the Proton acceptor of the active site. Residues phenylalanine 64, asparagine 66, and asparagine 112 each coordinate tRNA.

It belongs to the PTH family. Monomer.

It localises to the cytoplasm. It carries out the reaction an N-acyl-L-alpha-aminoacyl-tRNA + H2O = an N-acyl-L-amino acid + a tRNA + H(+). Hydrolyzes ribosome-free peptidyl-tRNAs (with 1 or more amino acids incorporated), which drop off the ribosome during protein synthesis, or as a result of ribosome stalling. Functionally, catalyzes the release of premature peptidyl moieties from peptidyl-tRNA molecules trapped in stalled 50S ribosomal subunits, and thus maintains levels of free tRNAs and 50S ribosomes. The sequence is that of Peptidyl-tRNA hydrolase from Alkaliphilus oremlandii (strain OhILAs) (Clostridium oremlandii (strain OhILAs)).